A 61-amino-acid polypeptide reads, in one-letter code: Metallothionein-1C (61 aa).

A beta region spans residues 1–29 (MDPNCSCSTGSSCSCAGSCTCKACRCPSC). A divalent metal cation contacts are provided by Cys5, Cys7, Cys13, Cys15, Cys19, Cys21, Cys24, Cys26, Cys29, Cys33, Cys34, Cys36, Cys37, Cys41, Cys44, Cys48, Cys50, Cys57, Cys59, and Cys60. The interval 30 to 61 (KKSCCSCCPVGCAKCAQGCICKGASDKCSCCA) is alpha.

This sequence belongs to the metallothionein superfamily. Type 1 family.

Its function is as follows. Metallothioneins have a high content of cysteine residues that bind various heavy metals; these proteins are transcriptionally regulated by both heavy metals and glucocorticoids. The polypeptide is Metallothionein-1C (MT1C) (Ovis aries (Sheep)).